The following is a 339-amino-acid chain: N-acetyl-gamma-glutamyl-phosphate reductase (339 aa).

Residue cysteine 145 is part of the active site.

Belongs to the NAGSA dehydrogenase family. Type 1 subfamily.

The protein resides in the cytoplasm. The enzyme catalyses N-acetyl-L-glutamate 5-semialdehyde + phosphate + NADP(+) = N-acetyl-L-glutamyl 5-phosphate + NADPH + H(+). The protein operates within amino-acid biosynthesis; L-arginine biosynthesis; N(2)-acetyl-L-ornithine from L-glutamate: step 3/4. In terms of biological role, catalyzes the NADPH-dependent reduction of N-acetyl-5-glutamyl phosphate to yield N-acetyl-L-glutamate 5-semialdehyde. The protein is N-acetyl-gamma-glutamyl-phosphate reductase of Kosmotoga olearia (strain ATCC BAA-1733 / DSM 21960 / TBF 19.5.1).